The sequence spans 237 residues: Uridylate kinase (237 aa).

Position 12 to 15 (12 to 15 (KLSG)) interacts with ATP. An involved in allosteric activation by GTP region spans residues 20–25 (GEDGLG). G54 lines the UMP pocket. ATP is bound by residues G55 and R59. UMP is bound by residues D74 and 135–142 (TGNPFFTT). ATP is bound by residues T162, Y168, and D171.

Belongs to the UMP kinase family. In terms of assembly, homohexamer.

It localises to the cytoplasm. It carries out the reaction UMP + ATP = UDP + ADP. It participates in pyrimidine metabolism; CTP biosynthesis via de novo pathway; UDP from UMP (UMPK route): step 1/1. Its activity is regulated as follows. Allosterically activated by GTP. Inhibited by UTP. Its function is as follows. Catalyzes the reversible phosphorylation of UMP to UDP. In Haemophilus influenzae (strain PittGG), this protein is Uridylate kinase.